Here is a 318-residue protein sequence, read N- to C-terminus: NADH-ubiquinone oxidoreductase chain 1 (318 aa).

Helical transmembrane passes span phenylalanine 2–leucine 22, phenylalanine 69–leucine 89, methionine 102–alanine 122, leucine 146–threonine 166, histidine 171–alanine 191, isoleucine 231–leucine 251, glutamate 253–valine 273, and leucine 294–isoleucine 314.

It belongs to the complex I subunit 1 family. Core subunit of respiratory chain NADH dehydrogenase (Complex I) which is composed of 45 different subunits.

The protein localises to the mitochondrion inner membrane. The catalysed reaction is a ubiquinone + NADH + 5 H(+)(in) = a ubiquinol + NAD(+) + 4 H(+)(out). Functionally, core subunit of the mitochondrial membrane respiratory chain NADH dehydrogenase (Complex I) which catalyzes electron transfer from NADH through the respiratory chain, using ubiquinone as an electron acceptor. Essential for the catalytic activity and assembly of complex I. In Dugong dugon (Dugong), this protein is NADH-ubiquinone oxidoreductase chain 1 (MT-ND1).